Here is a 131-residue protein sequence, read N- to C-terminus: Fumarate reductase subunit C (131 aa).

Transmembrane regions (helical) follow at residues 30–50, 57–77, and 109–129; these read EGTA…LFAL, WMGF…LITL, and IIKG…YVAL.

This sequence belongs to the FrdC family. As to quaternary structure, part of an enzyme complex containing four subunits: a flavoprotein (FrdA), an iron-sulfur protein (FrdB), and two hydrophobic anchor proteins (FrdC and FrdD).

It is found in the cell inner membrane. Its function is as follows. Two distinct, membrane-bound, FAD-containing enzymes are responsible for the catalysis of fumarate and succinate interconversion; fumarate reductase is used in anaerobic growth, and succinate dehydrogenase is used in aerobic growth. Anchors the catalytic components of the fumarate reductase complex to the cell inner membrane, binds quinones. The polypeptide is Fumarate reductase subunit C (Salmonella choleraesuis (strain SC-B67)).